Consider the following 318-residue polypeptide: Porphobilinogen deaminase (318 aa).

The residue at position 241 (Cys241) is an S-(dipyrrolylmethanemethyl)cysteine.

The protein belongs to the HMBS family. Monomer. Dipyrromethane is required as a cofactor.

The enzyme catalyses 4 porphobilinogen + H2O = hydroxymethylbilane + 4 NH4(+). Its pathway is porphyrin-containing compound metabolism; protoporphyrin-IX biosynthesis; coproporphyrinogen-III from 5-aminolevulinate: step 2/4. Functionally, tetrapolymerization of the monopyrrole PBG into the hydroxymethylbilane pre-uroporphyrinogen in several discrete steps. In Geotalea uraniireducens (strain Rf4) (Geobacter uraniireducens), this protein is Porphobilinogen deaminase.